The following is a 793-amino-acid chain: Wall-associated receptor kinase-like 18 (793 aa).

An N-terminal signal peptide occupies residues 1–28 (MSNESTNCSFFLNLFMLLLLLIFYSADA). The Extracellular segment spans residues 29-378 (CQRECGGISI…YRCVRDKTKA (350 aa)). Residues Asn60, Asn130, Asn170, Asn238, Asn285, and Asn304 are each glycosylated (N-linked (GlcNAc...) asparagine). The interval 312-371 (CTCGRITISETSYANCGCTYGYTGNPYVLNGCKDIDECKVKFEYCGKTETCVNFEGGYRC) is atypical EGF-like. Intrachain disulfides connect Cys314-Cys327, Cys349-Cys362, and Cys356-Cys371. The helical transmembrane segment at 379-399 (IMIGAGTGFGVLVLVGGLWWL) threads the bilayer. The Cytoplasmic portion of the chain corresponds to 400–793 (RKFLIKRRIT…VEPLFPRLTW (394 aa)). The 276-residue stretch at 453–728 (FSENRVLGHG…REVFTELERI (276 aa)) folds into the Protein kinase domain. Residues 459 to 467 (LGHGGQGTV) and Lys481 each bind ATP. Tyr526 carries the post-translational modification Phosphotyrosine. The active-site Proton acceptor is the Asp579. Phosphothreonine is present on residues Thr613 and Thr618. Position 626 is a phosphotyrosine (Tyr626). The segment at 733–757 (EDSQVHNRIDEEEEEEEEEEEVVTT) is disordered. Positions 742–754 (DEEEEEEEEEEEV) are enriched in acidic residues.

It belongs to the protein kinase superfamily. Ser/Thr protein kinase family.

Its subcellular location is the membrane. The catalysed reaction is L-seryl-[protein] + ATP = O-phospho-L-seryl-[protein] + ADP + H(+). It catalyses the reaction L-threonyl-[protein] + ATP = O-phospho-L-threonyl-[protein] + ADP + H(+). Its function is as follows. Serine/threonine-protein kinase that may function as a signaling receptor of extracellular matrix component. The polypeptide is Wall-associated receptor kinase-like 18 (WAKL18) (Arabidopsis thaliana (Mouse-ear cress)).